Consider the following 548-residue polypeptide: Glucose-6-phosphate isomerase (548 aa).

E353 (proton donor) is an active-site residue. Catalysis depends on residues H384 and K512.

This sequence belongs to the GPI family.

The protein localises to the cytoplasm. The enzyme catalyses alpha-D-glucose 6-phosphate = beta-D-fructose 6-phosphate. The protein operates within carbohydrate biosynthesis; gluconeogenesis. It functions in the pathway carbohydrate degradation; glycolysis; D-glyceraldehyde 3-phosphate and glycerone phosphate from D-glucose: step 2/4. Its function is as follows. Catalyzes the reversible isomerization of glucose-6-phosphate to fructose-6-phosphate. The polypeptide is Glucose-6-phosphate isomerase (Pseudoalteromonas translucida (strain TAC 125)).